The following is a 482-amino-acid chain: tRNA sulfurtransferase (482 aa).

The THUMP domain maps to L61 to R165. ATP contacts are provided by residues L183–I184, K265, G287, and Q296. C344 and C456 are oxidised to a cystine. One can recognise a Rhodanese domain in the interval F404–P482. The active-site Cysteine persulfide intermediate is the C456.

This sequence belongs to the ThiI family.

It localises to the cytoplasm. It catalyses the reaction [ThiI sulfur-carrier protein]-S-sulfanyl-L-cysteine + a uridine in tRNA + 2 reduced [2Fe-2S]-[ferredoxin] + ATP + H(+) = [ThiI sulfur-carrier protein]-L-cysteine + a 4-thiouridine in tRNA + 2 oxidized [2Fe-2S]-[ferredoxin] + AMP + diphosphate. It carries out the reaction [ThiS sulfur-carrier protein]-C-terminal Gly-Gly-AMP + S-sulfanyl-L-cysteinyl-[cysteine desulfurase] + AH2 = [ThiS sulfur-carrier protein]-C-terminal-Gly-aminoethanethioate + L-cysteinyl-[cysteine desulfurase] + A + AMP + 2 H(+). The protein operates within cofactor biosynthesis; thiamine diphosphate biosynthesis. Catalyzes the ATP-dependent transfer of a sulfur to tRNA to produce 4-thiouridine in position 8 of tRNAs, which functions as a near-UV photosensor. Also catalyzes the transfer of sulfur to the sulfur carrier protein ThiS, forming ThiS-thiocarboxylate. This is a step in the synthesis of thiazole, in the thiamine biosynthesis pathway. The sulfur is donated as persulfide by IscS. This chain is tRNA sulfurtransferase, found in Salmonella typhimurium (strain LT2 / SGSC1412 / ATCC 700720).